We begin with the raw amino-acid sequence, 116 residues long: NADH-ubiquinone oxidoreductase chain 3 (116 aa).

3 helical membrane-spanning segments follow: residues 3–23 (LITTIITITITLSAVLATISF), 56–76 (FFLIAILFLLFDLEIALLLPL), and 87–107 (LTLIWSTAVLALLTLGLIYEW).

Belongs to the complex I subunit 3 family.

The protein localises to the mitochondrion membrane. It carries out the reaction a ubiquinone + NADH + 5 H(+)(in) = a ubiquinol + NAD(+) + 4 H(+)(out). Functionally, core subunit of the mitochondrial membrane respiratory chain NADH dehydrogenase (Complex I) that is believed to belong to the minimal assembly required for catalysis. Complex I functions in the transfer of electrons from NADH to the respiratory chain. The immediate electron acceptor for the enzyme is believed to be ubiquinone. This chain is NADH-ubiquinone oxidoreductase chain 3 (MT-ND3), found in Oncorhynchus gorbuscha (Pink salmon).